Reading from the N-terminus, the 518-residue chain is U-box domain-containing protein 57 (518 aa).

Residues 86 to 142 (EEVRKVHILEEEIVTLKHQADTYLVQKEKAVTAYDQLKHERDNAVQQVNELRDQSTH) are a coiled coil. The Protein kinase domain occupies 159–409 (FKNAREVGDT…RPDLLNEVWI (251 aa)). Residues 434–508 (SVPAAFICPI…HGYLQQQQPN (75 aa)) enclose the U-box domain.

It carries out the reaction S-ubiquitinyl-[E2 ubiquitin-conjugating enzyme]-L-cysteine + [acceptor protein]-L-lysine = [E2 ubiquitin-conjugating enzyme]-L-cysteine + N(6)-ubiquitinyl-[acceptor protein]-L-lysine.. Its pathway is protein modification; protein ubiquitination. Functionally, possesses E3 ubiquitin-protein ligase in vitro. May be involved in cell death signaling. This is U-box domain-containing protein 57 (PUB57) from Oryza sativa subsp. japonica (Rice).